The chain runs to 148 residues: MAGIIFDDMFKVKSVDPDGKKFDRVSRYFCDAESFKMELIIDINSQIYPLKQNDKVRLVLATTLREDGLADEGEYDPKAEYPRIKQYEYVMYGKVYRLEDDDTGTDGGKLAAYASFGGLLMRLKGEAINLHGFEVDMNLYLLMKKTDF.

Residues 16–40 (DPDGKKFDRVSRYFCDAESFKMELI) form a non-specific ssDNA binding region.

Belongs to the eukaryotic RPB8 RNA polymerase subunit family. As to quaternary structure, component of the RNA polymerase I (Pol I), RNA polymerase II (Pol II) and RNA polymerase III (Pol III) complexes consisting of at least 13, 12 and 17 subunits, respectively. Directly interacts with POLR2A.

Its subcellular location is the nucleus. DNA-dependent RNA polymerase catalyzes the transcription of DNA into RNA using the four ribonucleoside triphosphates as substrates. Common component of RNA polymerases I, II and III which synthesize ribosomal RNA precursors, mRNA precursors and many functional non-coding RNAs, and small RNAs, such as 5S rRNA and tRNAs, respectively. This chain is Probable DNA-directed RNA polymerases I, II, and III subunit RPABC3 (rpb-8), found in Caenorhabditis elegans.